The primary structure comprises 398 residues: Probable aminomethyltransferase (398 aa).

This sequence belongs to the GcvT family. In terms of assembly, the glycine cleavage system is composed of four proteins: P, T, L and H.

It carries out the reaction N(6)-[(R)-S(8)-aminomethyldihydrolipoyl]-L-lysyl-[protein] + (6S)-5,6,7,8-tetrahydrofolate = N(6)-[(R)-dihydrolipoyl]-L-lysyl-[protein] + (6R)-5,10-methylene-5,6,7,8-tetrahydrofolate + NH4(+). In terms of biological role, the glycine cleavage system catalyzes the degradation of glycine. The polypeptide is Probable aminomethyltransferase (Thermococcus kodakarensis (strain ATCC BAA-918 / JCM 12380 / KOD1) (Pyrococcus kodakaraensis (strain KOD1))).